Reading from the N-terminus, the 607-residue chain is Elongation factor 4 (607 aa).

Residues 11 to 193 (SKIRNFSIIA…QIVEKVPAPA (183 aa)) enclose the tr-type G domain. GTP-binding positions include 23-28 (DHGKST) and 140-143 (NKID).

Belongs to the TRAFAC class translation factor GTPase superfamily. Classic translation factor GTPase family. LepA subfamily.

It is found in the cell membrane. It catalyses the reaction GTP + H2O = GDP + phosphate + H(+). In terms of biological role, required for accurate and efficient protein synthesis under certain stress conditions. May act as a fidelity factor of the translation reaction, by catalyzing a one-codon backward translocation of tRNAs on improperly translocated ribosomes. Back-translocation proceeds from a post-translocation (POST) complex to a pre-translocation (PRE) complex, thus giving elongation factor G a second chance to translocate the tRNAs correctly. Binds to ribosomes in a GTP-dependent manner. This Bacillus cereus (strain B4264) protein is Elongation factor 4.